We begin with the raw amino-acid sequence, 321 residues long: D-alanine--D-alanine ligase (321 aa).

One can recognise an ATP-grasp domain in the interval Arg121 to Lys315. Ile148–Gln199 lines the ATP pocket. Mg(2+) contacts are provided by Glu268, Glu282, and Asn284.

This sequence belongs to the D-alanine--D-alanine ligase family. Mg(2+) serves as cofactor. It depends on Mn(2+) as a cofactor.

The protein localises to the cytoplasm. It carries out the reaction 2 D-alanine + ATP = D-alanyl-D-alanine + ADP + phosphate + H(+). The protein operates within cell wall biogenesis; peptidoglycan biosynthesis. Functionally, cell wall formation. This is D-alanine--D-alanine ligase from Rickettsia bellii (strain RML369-C).